A 105-amino-acid chain; its full sequence is Putative membrane protein insertion efficiency factor (105 aa).

The protein belongs to the UPF0161 family.

The protein resides in the cell inner membrane. Functionally, could be involved in insertion of integral membrane proteins into the membrane. The protein is Putative membrane protein insertion efficiency factor of Nitratidesulfovibrio vulgaris (strain DSM 19637 / Miyazaki F) (Desulfovibrio vulgaris).